The chain runs to 650 residues: Threonine--tRNA ligase (650 aa).

Residues 5–67 (NKSMFIKLKD…QEGDQVILWG (63 aa)) enclose the TGS domain. Residues 246–537 (DHKLLGAKLD…LIEHYVGKFP (292 aa)) are catalytic. Residues C337, H388, and H514 each contribute to the Zn(2+) site.

Belongs to the class-II aminoacyl-tRNA synthetase family. As to quaternary structure, homodimer. Zn(2+) is required as a cofactor.

The protein localises to the cytoplasm. It catalyses the reaction tRNA(Thr) + L-threonine + ATP = L-threonyl-tRNA(Thr) + AMP + diphosphate + H(+). Functionally, catalyzes the attachment of threonine to tRNA(Thr) in a two-step reaction: L-threonine is first activated by ATP to form Thr-AMP and then transferred to the acceptor end of tRNA(Thr). Also edits incorrectly charged L-seryl-tRNA(Thr). This is Threonine--tRNA ligase from Protochlamydia amoebophila (strain UWE25).